Consider the following 346-residue polypeptide: Methylthioribose-1-phosphate isomerase (346 aa).

Residues 46–48, R89, and Q196 each bind substrate; that span reads RGA. Catalysis depends on D237, which acts as the Proton donor. 247-248 provides a ligand contact to substrate; the sequence is NK.

This sequence belongs to the eIF-2B alpha/beta/delta subunits family. MtnA subfamily.

The catalysed reaction is 5-(methylsulfanyl)-alpha-D-ribose 1-phosphate = 5-(methylsulfanyl)-D-ribulose 1-phosphate. The protein operates within amino-acid biosynthesis; L-methionine biosynthesis via salvage pathway; L-methionine from S-methyl-5-thio-alpha-D-ribose 1-phosphate: step 1/6. In terms of biological role, catalyzes the interconversion of methylthioribose-1-phosphate (MTR-1-P) into methylthioribulose-1-phosphate (MTRu-1-P). This is Methylthioribose-1-phosphate isomerase from Geobacter sulfurreducens (strain ATCC 51573 / DSM 12127 / PCA).